Consider the following 85-residue polypeptide: U4-theraphotoxin-Hhn1a (85 aa).

The N-terminal stretch at 1 to 22 (MKVTLIAILTCAAVLVLRTTAA) is a signal peptide. A propeptide spanning residues 23–48 (EELEAESQLMEVGMPDTELAAVDEER) is cleaved from the precursor. 3 disulfides stabilise this stretch: Cys52-Cys66, Cys56-Cys77, and Cys71-Cys82.

This sequence belongs to the neurotoxin 12 (Hwtx-2) family. 02 (Hwtx-2) subfamily. In terms of assembly, monomer. Expressed by the venom gland.

Its subcellular location is the secreted. In terms of biological role, neurotoxin active on both insects and mammals. The polypeptide is U4-theraphotoxin-Hhn1a (Cyriopagopus hainanus (Chinese bird spider)).